We begin with the raw amino-acid sequence, 513 residues long: Probable cytosol aminopeptidase (513 aa).

Mn(2+) is bound by residues K277 and D282. K289 is a catalytic residue. Mn(2+)-binding residues include D300, D359, and E361. R363 is an active-site residue.

It belongs to the peptidase M17 family. Requires Mn(2+) as cofactor.

Its subcellular location is the cytoplasm. It carries out the reaction Release of an N-terminal amino acid, Xaa-|-Yaa-, in which Xaa is preferably Leu, but may be other amino acids including Pro although not Arg or Lys, and Yaa may be Pro. Amino acid amides and methyl esters are also readily hydrolyzed, but rates on arylamides are exceedingly low.. The catalysed reaction is Release of an N-terminal amino acid, preferentially leucine, but not glutamic or aspartic acids.. Functionally, presumably involved in the processing and regular turnover of intracellular proteins. Catalyzes the removal of unsubstituted N-terminal amino acids from various peptides. The sequence is that of Probable cytosol aminopeptidase from Mycobacterium sp. (strain KMS).